Reading from the N-terminus, the 320-residue chain is Methionyl-tRNA formyltransferase (320 aa).

111–114 (SLLP) lines the (6S)-5,6,7,8-tetrahydrofolate pocket.

It belongs to the Fmt family.

The catalysed reaction is L-methionyl-tRNA(fMet) + (6R)-10-formyltetrahydrofolate = N-formyl-L-methionyl-tRNA(fMet) + (6S)-5,6,7,8-tetrahydrofolate + H(+). In terms of biological role, attaches a formyl group to the free amino group of methionyl-tRNA(fMet). The formyl group appears to play a dual role in the initiator identity of N-formylmethionyl-tRNA by promoting its recognition by IF2 and preventing the misappropriation of this tRNA by the elongation apparatus. This Methylacidiphilum infernorum (isolate V4) (Methylokorus infernorum (strain V4)) protein is Methionyl-tRNA formyltransferase.